The sequence spans 169 residues: Ribosome maturation factor RimM (169 aa).

Positions 96–169 (DGEYYWADLI…RILVDWGLDY (74 aa)) constitute a PRC barrel domain.

Belongs to the RimM family. As to quaternary structure, binds ribosomal protein uS19.

The protein resides in the cytoplasm. Its function is as follows. An accessory protein needed during the final step in the assembly of 30S ribosomal subunit, possibly for assembly of the head region. Essential for efficient processing of 16S rRNA. May be needed both before and after RbfA during the maturation of 16S rRNA. It has affinity for free ribosomal 30S subunits but not for 70S ribosomes. The polypeptide is Ribosome maturation factor RimM (Chromobacterium violaceum (strain ATCC 12472 / DSM 30191 / JCM 1249 / CCUG 213 / NBRC 12614 / NCIMB 9131 / NCTC 9757 / MK)).